Consider the following 656-residue polypeptide: Cyclic AMP-dependent transcription factor ATF-6 alpha (656 aa).

The segment at 1 to 137 (MESPFSPVLP…SPSSAEPLKE (137 aa)) is transcription activation. A Glycyl lysine isopeptide (Lys-Gly) (interchain with G-Cter in SUMO2) cross-link involves residue Lys-75. Low complexity-rich tracts occupy residues 81–101 (LSPA…SCSS) and 111–121 (LLSSSQSPLSL). The disordered stretch occupies residues 81–171 (LSPASSSCSV…SKPSVQPKPL (91 aa)). Lys-139 is covalently cross-linked (Glycyl lysine isopeptide (Lys-Gly) (interchain with G-Cter in ubiquitin)). The 64-residue stretch at 293–356 (VLRRQQRMIK…DQVVSENQRL (64 aa)) folds into the bZIP domain. Residues 295-326 (RRQQRMIKNRESACQSRKKKKEYMLGLEARLK) form a basic motif region. The tract at residues 335–342 (LKKENGSL) is leucine-zipper. The helical; Signal-anchor for type II membrane protein transmembrane segment at 378–398 (NYGPMSMLEQDSRRVKPSVSP) threads the bilayer. The Lumenal portion of the chain corresponds to 399–656 (ANQRRHLLEF…VVSTLPESVQ (258 aa)). The tract at residues 455–575 (QPLINTTESL…ATTHNKTTRP (121 aa)) is interaction with THBS4. Asn-459, Asn-570, and Asn-629 each carry an N-linked (GlcNAc...) asparagine glycan. Residues 632-656 (STFFGSPPTATETTHVVSTLPESVQ) form a disordered region.

It belongs to the bZIP family. ATF subfamily. In terms of assembly, interacts with XBP1 isoform 2; the interaction occurs in a ER stress-dependent manner. Interacts with LACC1. Interacts with THBS4 (via EGF-like 3; calcium-binding domain) which facilitates its processing, activation and nuclear translocation. Interacts (via lumenal domain) with THBS1. As to quaternary structure, homodimer and heterodimer with ATF6-beta. The dimer interacts with the nuclear transcription factor Y (NF-Y) trimer through direct binding to NF-Y subunit C (NF-YC). Also interacts with the transcription factors GTF2I, YY1 and SRF. In terms of processing, during unfolded protein response, a fragment of approximately 50 kDa containing the cytoplasmic transcription factor domain is released by proteolysis. The cleavage seems to be performed sequentially by site-1 (MBTPS1, S1P) and site-2 (MBTPS2, S2P) proteases. N-glycosylated; in its luminal domain. The glycosylation status may serve as a sensor for ER homeostasis, resulting in ATF6 activation to trigger the unfolded protein response (UPR). Post-translationally, ubiquitinated by RNF186 at Lys-139, which is required for pattern recognition receptor-induced unfolded protein response-associated outcomes.

It is found in the endoplasmic reticulum membrane. Its subcellular location is the golgi apparatus membrane. The protein localises to the nucleus. Precursor of the transcription factor form (Processed cyclic AMP-dependent transcription factor ATF-6 alpha), which is embedded in the endoplasmic reticulum membrane. Endoplasmic reticulum stress promotes processing of this form, releasing the transcription factor form that translocates into the nucleus, where it activates transcription of genes involved in the unfolded protein response (UPR). Functionally, transcription factor that initiates the unfolded protein response (UPR) during endoplasmic reticulum stress by activating transcription of genes involved in the UPR. Binds DNA on the 5'-CCAC[GA]-3'half of the ER stress response element (ERSE) (5'-CCAAT-N(9)-CCAC[GA]-3') and of ERSE II (5'-ATTGG-N-CCACG-3'). Binding to ERSE requires binding of NF-Y to ERSE. Could also be involved in activation of transcription by the serum response factor. May play a role in foveal development and cone function in the retina. The chain is Cyclic AMP-dependent transcription factor ATF-6 alpha (Atf6) from Rattus norvegicus (Rat).